The primary structure comprises 176 residues: Shikimate kinase (176 aa).

Residue 14-19 coordinates ATP; it reads GAGKSS. Serine 18 serves as a coordination point for Mg(2+). Substrate contacts are provided by aspartate 36, arginine 60, and glycine 82. Arginine 120 provides a ligand contact to ATP. Arginine 138 contacts substrate.

This sequence belongs to the shikimate kinase family. Monomer. Mg(2+) serves as cofactor.

It is found in the cytoplasm. The catalysed reaction is shikimate + ATP = 3-phosphoshikimate + ADP + H(+). The protein operates within metabolic intermediate biosynthesis; chorismate biosynthesis; chorismate from D-erythrose 4-phosphate and phosphoenolpyruvate: step 5/7. Catalyzes the specific phosphorylation of the 3-hydroxyl group of shikimic acid using ATP as a cosubstrate. This Dehalococcoides mccartyi (strain ATCC BAA-2100 / JCM 16839 / KCTC 5957 / BAV1) protein is Shikimate kinase.